A 319-amino-acid chain; its full sequence is uncharacterized protein (319 aa).

The N-terminal stretch at 1–23 is a signal peptide; the sequence is MFPFRRNVLAFAALLALSSPVLA.

To H.influenzae HI_0755.

This is an uncharacterized protein from Escherichia coli (strain K12).